Reading from the N-terminus, the 85-residue chain is Small ribosomal subunit protein bS20 (85 aa).

2 disordered regions span residues 1-25 and 62-85; these read MANI…ASIK and ARKG…QVNA.

The protein belongs to the bacterial ribosomal protein bS20 family.

Binds directly to 16S ribosomal RNA. This Bacillus cereus (strain G9842) protein is Small ribosomal subunit protein bS20.